Here is a 356-residue protein sequence, read N- to C-terminus: UDP-N-acetylglucosamine--N-acetylmuramyl-(pentapeptide) pyrophosphoryl-undecaprenol N-acetylglucosamine transferase (356 aa).

UDP-N-acetyl-alpha-D-glucosamine-binding positions include 11–13 (TGG), asparagine 117, arginine 160, serine 188, and glutamine 290.

It belongs to the glycosyltransferase 28 family. MurG subfamily.

Its subcellular location is the cell inner membrane. It catalyses the reaction di-trans,octa-cis-undecaprenyl diphospho-N-acetyl-alpha-D-muramoyl-L-alanyl-D-glutamyl-meso-2,6-diaminopimeloyl-D-alanyl-D-alanine + UDP-N-acetyl-alpha-D-glucosamine = di-trans,octa-cis-undecaprenyl diphospho-[N-acetyl-alpha-D-glucosaminyl-(1-&gt;4)]-N-acetyl-alpha-D-muramoyl-L-alanyl-D-glutamyl-meso-2,6-diaminopimeloyl-D-alanyl-D-alanine + UDP + H(+). It functions in the pathway cell wall biogenesis; peptidoglycan biosynthesis. Cell wall formation. Catalyzes the transfer of a GlcNAc subunit on undecaprenyl-pyrophosphoryl-MurNAc-pentapeptide (lipid intermediate I) to form undecaprenyl-pyrophosphoryl-MurNAc-(pentapeptide)GlcNAc (lipid intermediate II). The sequence is that of UDP-N-acetylglucosamine--N-acetylmuramyl-(pentapeptide) pyrophosphoryl-undecaprenol N-acetylglucosamine transferase from Rickettsia bellii (strain RML369-C).